The sequence spans 308 residues: Acetaldehyde dehydrogenase (308 aa).

NAD(+) is bound at residue 10 to 13 (SGNI). The Acyl-thioester intermediate role is filled by Cys-128. Residues 159–167 (SAGPGTRAN) and Asn-285 each bind NAD(+).

Belongs to the acetaldehyde dehydrogenase family.

The enzyme catalyses acetaldehyde + NAD(+) + CoA = acetyl-CoA + NADH + H(+). This chain is Acetaldehyde dehydrogenase, found in Salinispora tropica (strain ATCC BAA-916 / DSM 44818 / JCM 13857 / NBRC 105044 / CNB-440).